Reading from the N-terminus, the 138-residue chain is NADH dehydrogenase [ubiquinone] iron-sulfur protein 2, mitochondrial (138 aa).

The protein belongs to the complex I 49 kDa subunit family. In terms of assembly, core subunit of respiratory chain NADH dehydrogenase (Complex I) which is composed of 45 different subunits. Component of the iron-sulfur (IP) fragment of the enzyme. Interacts with NDUFAF3. Interacts with NDUFAF7. Interacts with CERS2. [4Fe-4S] cluster serves as cofactor. Post-translationally, dimethylation at Arg-118 by NDUFAF7 takes place after NDUFS2 assembles into the complex I, leading to stabilize the early intermediate complex.

It is found in the mitochondrion inner membrane. The enzyme catalyses a ubiquinone + NADH + 5 H(+)(in) = a ubiquinol + NAD(+) + 4 H(+)(out). Functionally, core subunit of the mitochondrial membrane respiratory chain NADH dehydrogenase (Complex I) which catalyzes electron transfer from NADH through the respiratory chain, using ubiquinone as an electron acceptor. Essential for the catalytic activity and assembly of complex I. Redox-sensitive, critical component of the oxygen-sensing pathway in the pulmonary vasculature which plays a key role in acute pulmonary oxygen-sensing and hypoxic pulmonary vasoconstriction. Plays an important role in carotid body sensing of hypoxia. Essential for glia-like neural stem and progenitor cell proliferation, differentiation and subsequent oligodendrocyte or neuronal maturation. This chain is NADH dehydrogenase [ubiquinone] iron-sulfur protein 2, mitochondrial, found in Mesocricetus auratus (Golden hamster).